A 447-amino-acid chain; its full sequence is Tubulin beta chain (447 aa).

Residues Gln11, Glu69, Ser138, Gly142, Thr143, Gly144, Asn204, and Asn226 each contribute to the GTP site. Glu69 serves as a coordination point for Mg(2+). The tract at residues 419–447 (VSEYQQYQDATADEEGEYEDEDQEAEDDM) is disordered. The span at 429 to 447 (TADEEGEYEDEDQEAEDDM) shows a compositional bias: acidic residues.

Belongs to the tubulin family. Dimer of alpha and beta chains. A typical microtubule is a hollow water-filled tube with an outer diameter of 25 nm and an inner diameter of 15 nM. Alpha-beta heterodimers associate head-to-tail to form protofilaments running lengthwise along the microtubule wall with the beta-tubulin subunit facing the microtubule plus end conferring a structural polarity. Microtubules usually have 13 protofilaments but different protofilament numbers can be found in some organisms and specialized cells. Requires Mg(2+) as cofactor.

Its subcellular location is the cytoplasm. The protein resides in the cytoskeleton. Functionally, tubulin is the major constituent of microtubules, a cylinder consisting of laterally associated linear protofilaments composed of alpha- and beta-tubulin heterodimers. Microtubules grow by the addition of GTP-tubulin dimers to the microtubule end, where a stabilizing cap forms. Below the cap, tubulin dimers are in GDP-bound state, owing to GTPase activity of alpha-tubulin. This chain is Tubulin beta chain (TUBB), found in Hordeum vulgare (Barley).